The chain runs to 394 residues: Protein DDI1 homolog 2 (394 aa).

The Ubiquitin-like domain maps to 1-81 (MLITVYCVRR…VILRQRETPE (81 aa)). The interval 82 to 128 (ARPAAPFPGLDFSTIAVPGSSSQPAPSQPQAPPPPPPDTSSFPQGLD) is disordered. Residues 107–119 (PSQPQAPPPPPPD) show a composition bias toward pro residues. The active site involves D247. A Ubiquitin-binding motif is present at residues 371-390 (EEIADRELAEVLQKSAEEAD).

Belongs to the DDI1 family. Homodimer.

It is found in the cytoplasm. The protein resides in the cytosol. Its subcellular location is the chromosome. Its function is as follows. Aspartic protease that mediates the cleavage of NFE2L1/NRF1 at 'Leu-104', thereby promoting release of NFE2L1/NRF1 from the endoplasmic reticulum membrane. Ubiquitination of NFE2L1/NRF1 is a prerequisite for cleavage, suggesting that DDI2 specifically recognizes and binds ubiquitinated NFE2L1/NRF1. Seems to act as a proteasomal shuttle which links the proteasome and replication fork proteins like RTF2. Required for cellular survival following replication stress. This is Protein DDI1 homolog 2 (ddi2) from Xenopus tropicalis (Western clawed frog).